The sequence spans 376 residues: Glutamate 5-kinase (376 aa).

K16 is an ATP binding site. Residues S56, D143, and N155 each contribute to the substrate site. Residue 175–176 participates in ATP binding; the sequence is TD. Residues 283–361 form the PUA domain; the sequence is RGALSLDEGA…RDIETTLGYV (79 aa).

Belongs to the glutamate 5-kinase family.

It localises to the cytoplasm. The enzyme catalyses L-glutamate + ATP = L-glutamyl 5-phosphate + ADP. Its pathway is amino-acid biosynthesis; L-proline biosynthesis; L-glutamate 5-semialdehyde from L-glutamate: step 1/2. Functionally, catalyzes the transfer of a phosphate group to glutamate to form L-glutamate 5-phosphate. The sequence is that of Glutamate 5-kinase from Halorhodospira halophila (strain DSM 244 / SL1) (Ectothiorhodospira halophila (strain DSM 244 / SL1)).